The sequence spans 126 residues: Large ribosomal subunit protein uL22 (126 aa).

This sequence belongs to the universal ribosomal protein uL22 family. In terms of assembly, part of the 50S ribosomal subunit.

Functionally, this protein binds specifically to 23S rRNA; its binding is stimulated by other ribosomal proteins, e.g. L4, L17, and L20. It is important during the early stages of 50S assembly. It makes multiple contacts with different domains of the 23S rRNA in the assembled 50S subunit and ribosome. Its function is as follows. The globular domain of the protein is located near the polypeptide exit tunnel on the outside of the subunit, while an extended beta-hairpin is found that lines the wall of the exit tunnel in the center of the 70S ribosome. This chain is Large ribosomal subunit protein uL22, found in Phenylobacterium zucineum (strain HLK1).